Reading from the N-terminus, the 316-residue chain is Protoheme IX farnesyltransferase (316 aa).

8 helical membrane passes run Val35–Gln55, Pro56–Leu76, Val119–Phe139, Ile156–Gly176, Leu183–Ile203, Ile229–Leu246, Gly250–Leu272, and Ala283–Leu303.

It belongs to the UbiA prenyltransferase family. Protoheme IX farnesyltransferase subfamily.

The protein resides in the cell inner membrane. The catalysed reaction is heme b + (2E,6E)-farnesyl diphosphate + H2O = Fe(II)-heme o + diphosphate. It functions in the pathway porphyrin-containing compound metabolism; heme O biosynthesis; heme O from protoheme: step 1/1. Converts heme B (protoheme IX) to heme O by substitution of the vinyl group on carbon 2 of heme B porphyrin ring with a hydroxyethyl farnesyl side group. This is Protoheme IX farnesyltransferase from Methylobacterium radiotolerans (strain ATCC 27329 / DSM 1819 / JCM 2831 / NBRC 15690 / NCIMB 10815 / 0-1).